We begin with the raw amino-acid sequence, 290 residues long: Phosphoribosylaminoimidazole-succinocarboxamide synthase (290 aa).

Belongs to the SAICAR synthetase family.

The enzyme catalyses 5-amino-1-(5-phospho-D-ribosyl)imidazole-4-carboxylate + L-aspartate + ATP = (2S)-2-[5-amino-1-(5-phospho-beta-D-ribosyl)imidazole-4-carboxamido]succinate + ADP + phosphate + 2 H(+). The protein operates within purine metabolism; IMP biosynthesis via de novo pathway; 5-amino-1-(5-phospho-D-ribosyl)imidazole-4-carboxamide from 5-amino-1-(5-phospho-D-ribosyl)imidazole-4-carboxylate: step 1/2. This chain is Phosphoribosylaminoimidazole-succinocarboxamide synthase, found in Haemophilus influenzae (strain PittGG).